Here is a 316-residue protein sequence, read N- to C-terminus: HPr kinase/phosphorylase (316 aa).

Residues histidine 143 and lysine 164 contribute to the active site. 158–165 (GEAGSGKS) provides a ligand contact to ATP. Serine 165 provides a ligand contact to Mg(2+). Aspartate 182 (proton acceptor; for phosphorylation activity. Proton donor; for dephosphorylation activity) is an active-site residue. Residues 206-215 (LEVRGLGVLN) form an important for the catalytic mechanism of both phosphorylation and dephosphorylation region. Residue glutamate 207 coordinates Mg(2+). Arginine 251 is an active-site residue. An important for the catalytic mechanism of dephosphorylation region spans residues 272–277 (PVMPGR).

The protein belongs to the HPrK/P family. As to quaternary structure, homohexamer. Requires Mg(2+) as cofactor.

It catalyses the reaction [HPr protein]-L-serine + ATP = [HPr protein]-O-phospho-L-serine + ADP + H(+). The catalysed reaction is [HPr protein]-O-phospho-L-serine + phosphate + H(+) = [HPr protein]-L-serine + diphosphate. Its function is as follows. Catalyzes the ATP- as well as the pyrophosphate-dependent phosphorylation of a specific serine residue in HPr, a phosphocarrier protein of the phosphoenolpyruvate-dependent sugar phosphotransferase system (PTS). HprK/P also catalyzes the pyrophosphate-producing, inorganic phosphate-dependent dephosphorylation (phosphorolysis) of seryl-phosphorylated HPr (P-Ser-HPr). In Xanthomonas campestris pv. campestris (strain 8004), this protein is HPr kinase/phosphorylase.